Consider the following 142-residue polypeptide: Transcription antitermination protein NusB (142 aa).

This sequence belongs to the NusB family.

In terms of biological role, involved in transcription antitermination. Required for transcription of ribosomal RNA (rRNA) genes. Binds specifically to the boxA antiterminator sequence of the ribosomal RNA (rrn) operons. The polypeptide is Transcription antitermination protein NusB (Persephonella marina (strain DSM 14350 / EX-H1)).